The following is a 228-amino-acid chain: Demethylmenaquinone methyltransferase (228 aa).

S-adenosyl-L-methionine is bound by residues Thr62, Asp80, 100-101 (DA), and Ser117.

It belongs to the class I-like SAM-binding methyltransferase superfamily. MenG/UbiE family.

It carries out the reaction a 2-demethylmenaquinol + S-adenosyl-L-methionine = a menaquinol + S-adenosyl-L-homocysteine + H(+). Its pathway is quinol/quinone metabolism; menaquinone biosynthesis; menaquinol from 1,4-dihydroxy-2-naphthoate: step 2/2. In terms of biological role, methyltransferase required for the conversion of demethylmenaquinol (DMKH2) to menaquinol (MKH2). In Mycolicibacterium vanbaalenii (strain DSM 7251 / JCM 13017 / BCRC 16820 / KCTC 9966 / NRRL B-24157 / PYR-1) (Mycobacterium vanbaalenii), this protein is Demethylmenaquinone methyltransferase.